The chain runs to 241 residues: Lipoprotein-releasing system ATP-binding protein LolD 2 (241 aa).

The region spanning Leu6 to Val241 is the ABC transporter domain. Gly43 to Thr50 contacts ATP.

It belongs to the ABC transporter superfamily. Lipoprotein translocase (TC 3.A.1.125) family. As to quaternary structure, the complex is composed of two ATP-binding proteins (LolD) and two transmembrane proteins (LolC and LolE).

It localises to the cell inner membrane. Part of the ABC transporter complex LolCDE involved in the translocation of mature outer membrane-directed lipoproteins, from the inner membrane to the periplasmic chaperone, LolA. Responsible for the formation of the LolA-lipoprotein complex in an ATP-dependent manner. The chain is Lipoprotein-releasing system ATP-binding protein LolD 2 from Chlorobium chlorochromatii (strain CaD3).